A 166-amino-acid polypeptide reads, in one-letter code: Endoribonuclease YbeY (166 aa).

The Zn(2+) site is built by His-111, His-115, and His-121. Positions 140-166 are disordered; it reads ELGYPDPYADDESADPPHSDTPSKDHE. The span at 154-166 shows a compositional bias: basic and acidic residues; sequence DPPHSDTPSKDHE.

It belongs to the endoribonuclease YbeY family. Zn(2+) is required as a cofactor.

The protein resides in the cytoplasm. Its function is as follows. Single strand-specific metallo-endoribonuclease involved in late-stage 70S ribosome quality control and in maturation of the 3' terminus of the 16S rRNA. In Pseudomonas syringae pv. syringae (strain B728a), this protein is Endoribonuclease YbeY.